The primary structure comprises 281 residues: Elongation factor Ts (281 aa).

An involved in Mg(2+) ion dislocation from EF-Tu region spans residues 80 to 83; that stretch reads TDFV.

This sequence belongs to the EF-Ts family.

It localises to the cytoplasm. Functionally, associates with the EF-Tu.GDP complex and induces the exchange of GDP to GTP. It remains bound to the aminoacyl-tRNA.EF-Tu.GTP complex up to the GTP hydrolysis stage on the ribosome. This is Elongation factor Ts from Aliivibrio fischeri (strain MJ11) (Vibrio fischeri).